Here is a 320-residue protein sequence, read N- to C-terminus: Aurora kinase B (320 aa).

Over residues M1–R10 the composition is skewed to basic and acidic residues. Positions M1–R38 are disordered. The Protein kinase domain occupies F53–V303. ATP-binding positions include L59 to V67 and K82. Residue D176 is the Proton acceptor of the active site.

The protein belongs to the protein kinase superfamily. Ser/Thr protein kinase family. Aurora subfamily. As to quaternary structure, component of the chromosomal passenger complex (CPC).

The protein localises to the nucleus. It is found in the chromosome. The protein resides in the centromere. Its subcellular location is the cytoplasm. It localises to the cytoskeleton. The protein localises to the spindle. It is found in the midbody. The catalysed reaction is L-seryl-[protein] + ATP = O-phospho-L-seryl-[protein] + ADP + H(+). It catalyses the reaction L-threonyl-[protein] + ATP = O-phospho-L-threonyl-[protein] + ADP + H(+). Its activity is regulated as follows. Kinase activity is stimulated by cell-cycle specific phosphorylation. Serine/threonine-protein kinase component of the chromosomal passenger complex (CPC), a complex that acts as a key regulator of mitosis. The CPC complex has essential functions at the centromere in ensuring correct chromosome alignment and segregation and is required for chromatin-induced microtubule stabilization and spindle assembly. Involved in the bipolar attachment of spindle microtubules to kinetochores and is a key regulator for the onset of cytokinesis during mitosis. Required for central/midzone spindle assembly and cleavage furrow formation. Key component of the cytokinesis checkpoint, a process required to delay abscission to prevent both premature resolution of intercellular chromosome bridges and accumulation of DNA damage. Phosphorylates 'Ser-10' of histone H3 during mitosis. The protein is Aurora kinase B (aurkb) of Danio rerio (Zebrafish).